Consider the following 290-residue polypeptide: Beta carbonic anhydrase 6, mitochondrial (290 aa).

A mitochondrion-targeting transit peptide spans 1-20; the sequence is MAFTLGGRARRLVSATSVHQ. The residue at position 122 (Ser122) is a Phosphoserine. S-nitrosocysteine is present on Cys226.

It belongs to the beta-class carbonic anhydrase family. Strongly expressed in aerial tissues including leaves, stems, flowers and siliques, and, to a lower extent, in roots. Accumulates in guard cells.

The protein resides in the mitochondrion. It catalyses the reaction hydrogencarbonate + H(+) = CO2 + H2O. Its function is as follows. Reversible hydration of carbon dioxide. The chain is Beta carbonic anhydrase 6, mitochondrial (BCA6) from Arabidopsis thaliana (Mouse-ear cress).